Reading from the N-terminus, the 136-residue chain is Large ribosomal subunit protein uL16 (136 aa).

The protein belongs to the universal ribosomal protein uL16 family. In terms of assembly, part of the 50S ribosomal subunit.

In terms of biological role, binds 23S rRNA and is also seen to make contacts with the A and possibly P site tRNAs. The polypeptide is Large ribosomal subunit protein uL16 (Actinobacillus pleuropneumoniae serotype 5b (strain L20)).